The sequence spans 403 residues: Phosphoglycerate kinase (403 aa).

Substrate contacts are provided by residues Asp21–Asn23, Arg36, His59–Arg62, Arg118, and Arg151. Residues Lys202, Glu328, and Gly354 to Ser357 each bind ATP.

It belongs to the phosphoglycerate kinase family. As to quaternary structure, monomer.

It is found in the cytoplasm. The enzyme catalyses (2R)-3-phosphoglycerate + ATP = (2R)-3-phospho-glyceroyl phosphate + ADP. Its pathway is carbohydrate degradation; glycolysis; pyruvate from D-glyceraldehyde 3-phosphate: step 2/5. In Akkermansia muciniphila (strain ATCC BAA-835 / DSM 22959 / JCM 33894 / BCRC 81048 / CCUG 64013 / CIP 107961 / Muc), this protein is Phosphoglycerate kinase.